Reading from the N-terminus, the 128-residue chain is Large ribosomal subunit protein bL12 (128 aa).

The protein belongs to the bacterial ribosomal protein bL12 family. Homodimer. Part of the ribosomal stalk of the 50S ribosomal subunit. Forms a multimeric L10(L12)X complex, where L10 forms an elongated spine to which 2 to 4 L12 dimers bind in a sequential fashion. Binds GTP-bound translation factors.

Functionally, forms part of the ribosomal stalk which helps the ribosome interact with GTP-bound translation factors. Is thus essential for accurate translation. The sequence is that of Large ribosomal subunit protein bL12 from Streptomyces antibioticus.